The primary structure comprises 214 residues: Acetoin utilization protein AcuB (214 aa).

CBS domains lie at 7–66 and 78–135; these read MKRD…ENKR and MKKD…GADQ.

As to quaternary structure, interacts with YabA.

It participates in ketone degradation; acetoin degradation. In terms of biological role, role in growth and sporulation on acetoin or butanediol. Involved in the breakdown of these compounds used as a carbon source. The chain is Acetoin utilization protein AcuB (acuB) from Bacillus subtilis (strain 168).